The following is a 302-amino-acid chain: Probable 2-(5''-triphosphoribosyl)-3'-dephosphocoenzyme-A synthase (302 aa).

It belongs to the CitG/MdcB family.

It catalyses the reaction 3'-dephospho-CoA + ATP = 2'-(5''-triphospho-alpha-D-ribosyl)-3'-dephospho-CoA + adenine. This is Probable 2-(5''-triphosphoribosyl)-3'-dephosphocoenzyme-A synthase from Citrobacter koseri (strain ATCC BAA-895 / CDC 4225-83 / SGSC4696).